A 425-amino-acid polypeptide reads, in one-letter code: Probable mitochondrial import inner membrane translocase subunit tin-44 (425 aa).

The stretch at 38-149 (FLNNLIDNVR…EHVEKVAEKV (112 aa)) forms a coiled coil.

It belongs to the Tim44 family. Probable component of the PAM complex at least composed of a mitochondrial HSP70 protein, GrpE, tin-44, tim-16 and tim-14/dnj-21. The complex interacts with the tim-23 component of the TIM23 complex.

Its subcellular location is the mitochondrion inner membrane. In terms of biological role, essential component of the PAM complex, a complex required for the translocation of transit peptide-containing proteins from the inner membrane into the mitochondrial matrix in an ATP-dependent manner. Recruits mitochondrial HSP70 to drive protein translocation into the matrix using ATP as an energy source. The protein is Probable mitochondrial import inner membrane translocase subunit tin-44 of Caenorhabditis elegans.